Here is a 980-residue protein sequence, read N- to C-terminus: Ovochymase-2 (980 aa).

Positions 1–21 are cleaved as a signal peptide; that stretch reads MAETSVFSIMMLTVMTAVGRG. A propeptide spans 22 to 49 (activation peptide); it reads ATDRPGRVSRCGERPSANASVTYNLLSR. Residue Asn-39 is glycosylated (N-linked (GlcNAc...) asparagine). One can recognise a Peptidase S1 1 domain in the interval 50–299; sequence IVGGTSAVKG…LLNWLSANLN (250 aa). A disulfide bridge links Cys-75 with Cys-91. His-90 acts as the Charge relay system in catalysis. Positions 112 and 117 each coordinate Ca(2+). Asp-140 (charge relay system) is an active-site residue. Intrachain disulfides connect Cys-174–Cys-244, Cys-205–Cys-223, Cys-234–Cys-263, Cys-312–Cys-342, Cys-369–Cys-388, Cys-435–Cys-462, Cys-489–Cys-510, Cys-618–Cys-634, Cys-716–Cys-779, Cys-744–Cys-757, and Cys-769–Cys-798. The active-site Charge relay system is Ser-238. 2 consecutive CUB domains span residues 312–425 and 435–547; these read CSTN…YQAV and CGSV…ISFV. The Peptidase S1 2 domain occupies 593 to 822; it reads IIKAEEAMPN…FIPWIMETIL (230 aa). A propeptide spans 593 to 980 (activation peptide); it reads IIKAEEAMPN…WLSYSFHNQN (388 aa). The N-linked (GlcNAc...) asparagine glycan is linked to Asn-766. The disordered stretch occupies residues 835 to 863; the sequence is HHPLIPPDKLSQEKALLPDSPPSNDSSSS. N-linked (GlcNAc...) asparagine glycans are attached at residues Asn-858 and Asn-932.

It belongs to the peptidase S1 family. The catalytically inactive 108 kDa form is processed both N- and C-terminally to give rise to catalytically active and inactive forms. As to expression, differentially expressed in the oviductal pars recta (PR) region.

Its subcellular location is the secreted. The enzyme catalyses Preferential cleavage at 371-Gly-Ser-Arg-|-Trp-374 of glycoprotein gp43 in Xenopus laevis coelemic egg envelope to yield gp41.. Its function is as follows. Mediates gamete interaction by affecting the vitelline coat. In Rhinella arenarum (Argentine common toad), this protein is Ovochymase-2 (OVCH2).